Consider the following 335-residue polypeptide: Beta-hexosaminidase (335 aa).

Substrate contacts are provided by residues D60, R68, R133, and 163 to 164 (KH). The active-site Proton donor/acceptor is the H176. The active-site Nucleophile is D247.

The protein belongs to the glycosyl hydrolase 3 family. NagZ subfamily.

Its subcellular location is the cytoplasm. It carries out the reaction Hydrolysis of terminal non-reducing N-acetyl-D-hexosamine residues in N-acetyl-beta-D-hexosaminides.. It participates in cell wall biogenesis; peptidoglycan recycling. Functionally, plays a role in peptidoglycan recycling by cleaving the terminal beta-1,4-linked N-acetylglucosamine (GlcNAc) from peptide-linked peptidoglycan fragments, giving rise to free GlcNAc, anhydro-N-acetylmuramic acid and anhydro-N-acetylmuramic acid-linked peptides. The protein is Beta-hexosaminidase of Xylella fastidiosa (strain M23).